The sequence spans 218 residues: Insulin-induced gene 2 protein (218 aa).

Residues 1–21 (MGDRENVSYGSRPILAQKMNL) lie on the Cytoplasmic side of the membrane. The helical transmembrane segment at 22–44 (LLRGFLLFLIGVFLALVLNLLQV) threads the bilayer. Over 45-63 (QRNVTLFPPDVLSSLFSSA) the chain is Lumenal. A helical transmembrane segment spans residues 64–81 (WWVPLCCGTAAAAIGLLY). The Cytoplasmic segment spans residues 82–96 (PCIDRHLGEPHKFKR). Residues 97–119 (EWSSVMRCVAVFVGINHASAKVD) form a helical membrane-spanning segment. The Lumenal portion of the chain corresponds to 120-122 (FAN). A helical transmembrane segment spans residues 123–141 (NMQLSLTLAALSIGLWWTF). The Cytoplasmic portion of the chain corresponds to 142-146 (DRSRS). Residues 147-168 (GLGLGIGISFFATLVSQLLVYN) traverse the membrane as a helical segment. Residues 169–182 (GVYEYTAPDFLYVR) lie on the Lumenal side of the membrane. Residues 183-200 (SWLPCIFFAGGITMGNIG) form a helical membrane-spanning segment. Residues 201-218 (RQLEMYERKALVEKSHRD) are Cytoplasmic-facing. Positions 212–218 (VEKSHRD) match the KxHxx motif.

The protein belongs to the INSIG family. As to quaternary structure, interacts with scap; interaction is direct and only takes place in the presence of sterols; it prevents interaction between scap and the coat protein complex II (COPII). Associates with the SCAP-SREBP complex; association is mediated via its interaction with scap and only takes place in the presence of sterols.

The protein localises to the endoplasmic reticulum membrane. Its function is as follows. Oxysterol-binding protein that mediates feedback control of cholesterol synthesis by controlling both endoplasmic reticulum to Golgi transport of scap and degradation of hmgcr. Acts as a negative regulator of cholesterol biosynthesis by mediating the retention of the SCAP-SREBP complex in the endoplasmic reticulum, thereby blocking the processing of sterol regulatory element-binding proteins (SREBPs). Binds oxysterol, including 22-hydroxycholesterol, 24-hydroxycholesterol, 25-hydroxycholesterol and 27-hydroxycholesterol, regulating interaction with scap and retention of the SCAP-SREBP complex in the endoplasmic reticulum. In presence of oxysterol, interacts with scap, retaining the SCAP-SREBP complex in the endoplasmic reticulum, thereby preventing scap from escorting SREBPs to the Golgi. Sterol deprivation reduce oxysterol-binding, disrupting the interaction between insig2 and scap, thereby promoting Golgi transport of the SCAP-SREBP complex, followed by processing and nuclear translocation of SREBPs. Also regulates cholesterol synthesis by regulating degradation of hmgcr. The sequence is that of Insulin-induced gene 2 protein from Xenopus laevis (African clawed frog).